The sequence spans 84 residues: MAFGAGGGGGGRRPFFRRRKSCPFSGENAPKIDYKDVKLLSRYVSERGKIVPSRITAVSAKKQRELAQAIKRSRFLGLLPYVIK.

Belongs to the bacterial ribosomal protein bS18 family. Part of the 30S ribosomal subunit. Forms a tight heterodimer with protein bS6.

Its function is as follows. Binds as a heterodimer with protein bS6 to the central domain of the 16S rRNA, where it helps stabilize the platform of the 30S subunit. This Methylorubrum extorquens (strain CM4 / NCIMB 13688) (Methylobacterium extorquens) protein is Small ribosomal subunit protein bS18.